We begin with the raw amino-acid sequence, 311 residues long: MQENQQITKKEQYNLNKLQKRLRRNVGEAIADFNMIEEGDRIMVCLSGGKDSYTMLEILRNLQQSAPINFSLVAVNLDQKQPGFPEHVLPEYLEKLGVEYKIVEENTYGIVKEKIPEGKTTCSLCSRLRRGILYRTATELGATKIALGHHRDDILQTLFLNMFYGGKMKGMPPKLMSDDGKHIVIRPLAYCREKDIQRFADAKAFPIIPCNLCGSQPNLQRQVIADMLRDWDKRYPGRIETMFSAMQNVVPSHLCDTNLFDFKGITHGSEVVNGGDLAFDREEIPLQPACWQPEEDENQLDELRLNVVEVK.

The PP-loop motif signature appears at 47 to 52 (SGGKDS). Positions 122, 125, and 213 each coordinate [4Fe-4S] cluster.

The protein belongs to the TtcA family. In terms of assembly, homodimer. Mg(2+) serves as cofactor. Requires [4Fe-4S] cluster as cofactor.

It localises to the cytoplasm. It carries out the reaction cytidine(32) in tRNA + S-sulfanyl-L-cysteinyl-[cysteine desulfurase] + AH2 + ATP = 2-thiocytidine(32) in tRNA + L-cysteinyl-[cysteine desulfurase] + A + AMP + diphosphate + H(+). Its pathway is tRNA modification. Functionally, catalyzes the ATP-dependent 2-thiolation of cytidine in position 32 of tRNA, to form 2-thiocytidine (s(2)C32). The sulfur atoms are provided by the cysteine/cysteine desulfurase (IscS) system. The protein is tRNA-cytidine(32) 2-sulfurtransferase of Escherichia coli (strain K12 / MC4100 / BW2952).